The sequence spans 313 residues: D-alanine--D-alanine ligase (313 aa).

Positions 108–308 (KLVWQQTGVP…YSELVVKVLS (201 aa)) constitute an ATP-grasp domain. Residue 138-193 (VAKLGLPLFVKPASEGSSVAVLKVKTADALPAALAEAATHDKIVIVEKSIEGGGEY) participates in ATP binding. Residues aspartate 262, glutamate 275, and asparagine 277 each coordinate Mg(2+).

Belongs to the D-alanine--D-alanine ligase family. Mg(2+) is required as a cofactor. Mn(2+) serves as cofactor.

Its subcellular location is the cytoplasm. It catalyses the reaction 2 D-alanine + ATP = D-alanyl-D-alanine + ADP + phosphate + H(+). It functions in the pathway cell wall biogenesis; peptidoglycan biosynthesis. Its function is as follows. Cell wall formation. In Burkholderia orbicola (strain MC0-3), this protein is D-alanine--D-alanine ligase.